The chain runs to 218 residues: Small ribosomal subunit protein uS3c (218 aa).

Residues 43-118 (IKNYVQKNTR…KLNIAITRIG (76 aa)) enclose the KH type-2 domain.

The protein belongs to the universal ribosomal protein uS3 family. Part of the 30S ribosomal subunit.

It localises to the plastid. Its subcellular location is the chloroplast. This is Small ribosomal subunit protein uS3c (rps3) from Gossypium barbadense (Sea Island cotton).